The sequence spans 105 residues: Serine protease inhibitor Kazal-type 6 (105 aa).

A signal peptide spans 1-23 (MKVAGVFLLLSLALLCFFSGAFS). Q24 bears the Pyrrolidone carboxylic acid mark. A Kazal-like domain is found at 49–105 (RLFQINCGEFRDPKVFCTRESDPLCGSDGQTYGNKCAFCKALEKSSGKINLKHRGKC). 3 disulfides stabilise this stretch: C55-C87, C65-C84, and C73-C105.

Expressed in the upper epidermis and in skin appendages.

Its subcellular location is the secreted. Serine protease inhibitor selective for kallikreins. Efficiently inhibits KLK5 and human KLK2, KLK4, KLK5, KLK6, KLK7, KLK12, KLK13 and KLK14. Doesn't inhibit human KLK1 and KLK8. This chain is Serine protease inhibitor Kazal-type 6 (Spink6), found in Mus musculus (Mouse).